The primary structure comprises 261 residues: 5'-nucleotidase SurE (261 aa).

Residues aspartate 8, aspartate 9, serine 39, and asparagine 91 each coordinate a divalent metal cation.

It belongs to the SurE nucleotidase family. It depends on a divalent metal cation as a cofactor.

The protein localises to the cytoplasm. It carries out the reaction a ribonucleoside 5'-phosphate + H2O = a ribonucleoside + phosphate. In terms of biological role, nucleotidase that shows phosphatase activity on nucleoside 5'-monophosphates. This chain is 5'-nucleotidase SurE, found in Polaromonas sp. (strain JS666 / ATCC BAA-500).